A 232-amino-acid chain; its full sequence is Ribonuclease 3 (232 aa).

The region spanning 5 to 134 (QTVLKNHFAI…FLGALLLDKD (130 aa)) is the RNase III domain. Residue Glu47 coordinates Mg(2+). Asp51 is a catalytic residue. Mg(2+)-binding residues include Asp120 and Glu123. Residue Glu123 is part of the active site. Residues 160-229 (DYKTHLQELL…AKNAVEKGLD (70 aa)) form the DRBM domain.

This sequence belongs to the ribonuclease III family. Homodimer. It depends on Mg(2+) as a cofactor.

The protein localises to the cytoplasm. The enzyme catalyses Endonucleolytic cleavage to 5'-phosphomonoester.. Its function is as follows. Digests double-stranded RNA. Involved in the processing of primary rRNA transcript to yield the immediate precursors to the large and small rRNAs (23S and 16S). Processes some mRNAs, and tRNAs when they are encoded in the rRNA operon. Processes pre-crRNA and tracrRNA of type II CRISPR loci if present in the organism. The protein is Ribonuclease 3 of Streptococcus pneumoniae (strain Taiwan19F-14).